The sequence spans 147 residues: MKYTKKEKEELKKVLTEEEYYVTQENGTERPFTNEYWDFNGEGIYVDITTGEPLFTSKDKFHSSCGWPAFSKPIDRSIIKEKVDKSHGMIRTEVRSKLGDSHLGHVFCDGPEELGGLRYCINSASLKFIPKEELKEKGYEEYLELFK.

The MsrB domain occupies 8–131; it reads KEELKKVLTE…NSASLKFIPK (124 aa). Cys120 functions as the Nucleophile in the catalytic mechanism.

Belongs to the MsrB Met sulfoxide reductase family.

The catalysed reaction is L-methionyl-[protein] + [thioredoxin]-disulfide + H2O = L-methionyl-(R)-S-oxide-[protein] + [thioredoxin]-dithiol. The chain is Peptide methionine sulfoxide reductase MsrB from Clostridium perfringens (strain ATCC 13124 / DSM 756 / JCM 1290 / NCIMB 6125 / NCTC 8237 / Type A).